The sequence spans 251 residues: GTP cyclohydrolase 1 type 2 homolog (251 aa).

A divalent metal cation contacts are provided by His62, His63, Asp103, His215, and Glu219.

It belongs to the GTP cyclohydrolase I type 2/NIF3 family. Homohexamer.

This chain is GTP cyclohydrolase 1 type 2 homolog, found in Mycoplasmopsis pulmonis (strain UAB CTIP) (Mycoplasma pulmonis).